An 821-amino-acid chain; its full sequence is BDNF/NT-3 growth factors receptor (821 aa).

The N-terminal stretch at 1–31 (MSPWLKWHGPAMARLWGLCLLVLGFWRASLA) is a signal peptide. Cystine bridges form between Cys-32–Cys-38 and Cys-36–Cys-45. The LRRNT domain maps to 32–61 (CPTSCKCSSARIWCTEPSPGIVAFPRLEPN). Residues 32–429 (CPTSCKCSSA…DVADQSNREH (398 aa)) are Extracellular-facing. Asn-67, Asn-95, and Asn-121 each carry an N-linked (GlcNAc...) asparagine glycan. LRR repeat units lie at residues 92 to 113 (GLRNLTIVDSGLKFVAYKAFLK) and 116 to 137 (NLRHINFTRNKLTSLSRRHFRH). An LRRCT domain is found at 148 to 196 (NPFTCSCDIMWLKTLQETKSSPDTQDLYCLNESSKNMPLANLQIPNCGL). 2 disulfides stabilise this stretch: Cys-152–Cys-176 and Cys-154–Cys-194. Residues Asn-178, Asn-205, Asn-241, Asn-254, Asn-280, Asn-325, Asn-338, Asn-350, and Asn-411 are each glycosylated (N-linked (GlcNAc...) asparagine). Ig-like C2-type domains lie at 197 to 282 (PSAR…VNLT) and 301 to 365 (WCIP…MAKN). A disulfide bridge links Cys-218 with Cys-266. An intrachain disulfide couples Cys-302 to Cys-345. A helical transmembrane segment spans residues 430–453 (LSVYAVVVIASVVGFCLLVMLLLL). An interaction with MAPK8IP3/JIP3 region spans residues 454 to 465 (KLARHSKFGMKG). Topologically, residues 454–821 (KLARHSKFGM…ASPVYLDILG (368 aa)) are cytoplasmic. The interval 474 to 497 (DDSASPLHHISNGSNTPSSSEGGP) is disordered. A compositionally biased stretch (polar residues) spans 484–494 (SNGSNTPSSSE). The residue at position 515 (Tyr-515) is a Phosphotyrosine. A Protein kinase domain is found at 537–806 (IVLKRELGEG…KNIKSIHTLL (270 aa)). Residues 543 to 551 (LGEGAFGKV) and Lys-571 each bind ATP. The active-site Proton acceptor is Asp-675. Residues Tyr-701, Tyr-705, Tyr-706, and Tyr-816 each carry the phosphotyrosine; by autocatalysis modification.

It belongs to the protein kinase superfamily. Tyr protein kinase family. Insulin receptor subfamily. In terms of assembly, exists in a dynamic equilibrium between monomeric (low affinity) and dimeric (high affinity) structures. Interacts (phosphorylated upon activation by BDNF) with SHC1; mediates SHC1 phosphorylation and activation. Interacts (phosphorylated upon activation by BDNF) with PLCG1 and/or PLCG2; mediates PLCG1 phosphorylation and activation. Interacts with SH2B1 and SH2B2. Interacts with NGFR; may regulate the ligand specificity of the receptor. Interacts with SORCS2; this interaction is important for normal targeting to post-synaptic densities in response to high-frequency stimulation. Interacts (phosphorylated upon ligand-binding) with SH2D1A; regulates NTRK2. Interacts with SQSTM1 and KIDINS220. Interacts (phosphorylated upon ligand-binding) with FRS2; activates the MAPK signaling pathway. Interacts with APPL1. Interacts with MAPK8IP3/JIP3 and KLC1; interaction with KLC1 is mediated by MAPK8IP3/JIP3. Interacts with SORL1; this interaction facilitates NTRK2 trafficking between synaptic plasma membranes, postsynaptic densities and cell soma, hence positively regulates BDNF signaling. Interacts with SLITRK2. Post-translationally, phosphorylated. Undergoes ligand-mediated autophosphorylation that is required for interaction with SHC1 and PLCG1 and other downstream effectors. Some isoforms are not phosphorylated. In terms of processing, ubiquitinated. Undergoes polyubiquitination upon activation; regulated by NGFR. Ubiquitination regulates the internalization of the receptor. As to expression, expressed in the brain, in neurons (at protein level). Detected in hippocampus (at protein level). Widely expressed in the central and peripheral nervous system. The different forms are differentially expressed in various cell types. Isoform GP95-TRKB is specifically expressed in glial cells.

It is found in the cell membrane. The protein resides in the endosome membrane. The protein localises to the early endosome membrane. Its subcellular location is the cell projection. It localises to the axon. It is found in the dendrite. The protein resides in the cytoplasm. The protein localises to the perinuclear region. Its subcellular location is the postsynaptic density. It catalyses the reaction L-tyrosyl-[protein] + ATP = O-phospho-L-tyrosyl-[protein] + ADP + H(+). Its activity is regulated as follows. The formation of active receptors dimers able to fully transduce the ligand-mediated signal, may be negatively regulated by the formation of inactive heterodimers with the non-catalytic isoforms. The neuronal activity and the influx of calcium positively regulate the kinase activity and the internalization of the receptor which are both important for active signaling. Regulated by NGFR that may control the internalization of the receptor. NGFR may also stimulate the activation by BDNF compared to NTF3 and NTF4. SH2D1A inhibits the autophosphorylation of the receptor, and alters the recruitment and activation of downstream effectors and signaling cascades. In terms of biological role, receptor tyrosine kinase involved in the development and the maturation of the central and the peripheral nervous systems through regulation of neuron survival, proliferation, migration, differentiation, and synapse formation and plasticity. Receptor for BDNF/brain-derived neurotrophic factor and NTF4/neurotrophin-4. Alternatively can also bind NTF3/neurotrophin-3 which is less efficient in activating the receptor but regulates neuron survival through NTRK2. Upon ligand-binding, undergoes homodimerization, autophosphorylation and activation. Recruits, phosphorylates and/or activates several downstream effectors including SHC1, FRS2, SH2B1, SH2B2 and PLCG1 that regulate distinct overlapping signaling cascades. Through SHC1, FRS2, SH2B1, SH2B2 activates the GRB2-Ras-MAPK cascade that regulates for instance neuronal differentiation including neurite outgrowth. Through the same effectors controls the Ras-PI3 kinase-AKT1 signaling cascade that mainly regulates growth and survival. Through PLCG1 and the downstream protein kinase C-regulated pathways controls synaptic plasticity. Thereby, plays a role in learning and memory by regulating both short term synaptic function and long-term potentiation. PLCG1 also leads to NF-Kappa-B activation and the transcription of genes involved in cell survival. Hence, it is able to suppress anoikis, the apoptosis resulting from loss of cell-matrix interactions. Isoform GP95-TRKB may also play a role in neutrophin-dependent calcium signaling in glial cells and mediate communication between neurons and glia. The protein is BDNF/NT-3 growth factors receptor of Mus musculus (Mouse).